Here is a 347-residue protein sequence, read N- to C-terminus: Spermatogenesis associated 6-like protein (347 aa).

The interval 115–199 is disordered; the sequence is SKSHGQRVQA…ENNLEHCSKK (85 aa). Residues 116–125 show a composition bias toward polar residues; sequence KSHGQRVQAT. Residues 153–166 are compositionally biased toward basic residues; it reads LHLHRPTQRNHGKS. A compositionally biased stretch (basic and acidic residues) spans 170 to 183; it reads PGERKPPFVVRHVD. A phosphoserine mark is found at Ser218 and Ser221. Residues 234–285 form a disordered region; sequence ERIVLKSQPPPPVDSSESRKPSLSHQGDASLHTETSVTTSQLSRPPSPLNQP. The span at 254 to 277 shows a compositional bias: polar residues; it reads PSLSHQGDASLHTETSVTTSQLSR.

This sequence belongs to the SPATA6 family.

The sequence is that of Spermatogenesis associated 6-like protein (Spata6l) from Mus musculus (Mouse).